Consider the following 148-residue polypeptide: uncharacterized protein (148 aa).

An N-terminal signal peptide occupies residues Met-1 to Ala-23. Residues Gln-22 to Leu-45 form a disordered region.

To M.leprae ML2452.

This is an uncharacterized protein from Mycobacterium bovis (strain ATCC BAA-935 / AF2122/97).